A 255-amino-acid chain; its full sequence is 1-(5-phosphoribosyl)-5-[(5-phosphoribosylamino)methylideneamino] imidazole-4-carboxamide isomerase (255 aa).

Residue Asp-8 is the Proton acceptor of the active site. Residue Asp-129 is the Proton donor of the active site.

This sequence belongs to the HisA/HisF family.

It localises to the cytoplasm. The catalysed reaction is 1-(5-phospho-beta-D-ribosyl)-5-[(5-phospho-beta-D-ribosylamino)methylideneamino]imidazole-4-carboxamide = 5-[(5-phospho-1-deoxy-D-ribulos-1-ylimino)methylamino]-1-(5-phospho-beta-D-ribosyl)imidazole-4-carboxamide. The protein operates within amino-acid biosynthesis; L-histidine biosynthesis; L-histidine from 5-phospho-alpha-D-ribose 1-diphosphate: step 4/9. The protein is 1-(5-phosphoribosyl)-5-[(5-phosphoribosylamino)methylideneamino] imidazole-4-carboxamide isomerase of Parasynechococcus marenigrum (strain WH8102).